Here is a 95-residue protein sequence, read N- to C-terminus: Gas vesicle protein S (95 aa).

This sequence belongs to the gas vesicle GvpA family.

It is found in the gas vesicle. Probably a minor component of the gas vesicle. It is not clear what function gas vesicles perform in soil bacteria. Its function is as follows. When a minimal gvp locus (gvpA2-gvpR-gvpN-gvpF-gvpG-gvpL-gvpS-gvpK-gvpJ-gvpT-gvpU, called pNL29) is expressed in E.coli gas vesicles are made. This is Gas vesicle protein S from Priestia megaterium (Bacillus megaterium).